Consider the following 647-residue polypeptide: C2H2 finger domain transcription factor USV101 (647 aa).

Over residues 1–10 (MSFVAPDDRA) the composition is skewed to basic and acidic residues. Residues 1-132 (MSFVAPDDRA…ATGYTPDGQP (132 aa)) form a disordered region. Composition is skewed to polar residues over residues 27 to 54 (ESTSPDQRLPSSHSYNKSASAPNESPNQ) and 66 to 84 (SSHSYPPQPMTPLTGSTAY). Low complexity predominate over residues 97 to 122 (PTQQQQQQQSEQHIPSPPSSSNRPPS). 2 consecutive C2H2-type zinc fingers follow at residues 144–169 (FRCRGYGDCDKVFTRSEHLARHVRKH) and 175–197 (FPCHCGKAFSRLDNLRQHAATVH). The tract at residues 220–647 (QRASREQRRR…VKQQDDKKTQ (428 aa)) is disordered. The segment covering 222 to 248 (ASREQRRRGEVVEVPKGAVERRRETRK) has biased composition (basic and acidic residues). Over residues 249-259 (AQAAAAQAAAA) the composition is skewed to low complexity. Residues 261–278 (GHSQQNSPYAQYHESQWN) are compositionally biased toward polar residues. Low complexity-rich tracts occupy residues 312 to 327 (SSSAGYGYQQGYYDSA), 404 to 414 (HGAYPPHDAAA), and 421 to 434 (GYYHPAHAAHGSYP). Positions 504 to 515 (RAEDDFGKDDRK) are enriched in basic and acidic residues. A compositionally biased stretch (low complexity) spans 521–540 (SPSNSQVPDSSTAAHANGAH). The span at 628-647 (VDKEREKKEEVKQQDDKKTQ) shows a compositional bias: basic and acidic residues.

It localises to the nucleus. The protein resides in the cytoplasm. In terms of biological role, transcription factor that promotes pheromone gene expression, which results in a subsequent increase in cell fusion. Also promotes production of melanin and capsule and thereby is required for full virulence. The polypeptide is C2H2 finger domain transcription factor USV101 (Cryptococcus neoformans var. grubii serotype A (strain H99 / ATCC 208821 / CBS 10515 / FGSC 9487) (Filobasidiella neoformans var. grubii)).